Consider the following 103-residue polypeptide: UPF0145 protein EF_0241 (103 aa).

It belongs to the UPF0145 family.

This is UPF0145 protein EF_0241 from Enterococcus faecalis (strain ATCC 700802 / V583).